The chain runs to 880 residues: Translation initiation factor IF-2 (880 aa).

Positions 259–281 are disordered; that stretch reads KNREEARAVGRSSKSQSKRKSST. The tr-type G domain occupies 379–548; it reads SRAPVVTIMG…LLQAEVLELK (170 aa). The segment at 388–395 is G1; sequence GHVDHGKT. Position 388–395 (388–395) interacts with GTP; the sequence is GHVDHGKT. The tract at residues 413 to 417 is G2; that stretch reads GITQH. The G3 stretch occupies residues 434–437; that stretch reads DTPG. Residues 434 to 438 and 488 to 491 contribute to the GTP site; these read DTPGH and NKID. A G4 region spans residues 488-491; that stretch reads NKID. The tract at residues 524–526 is G5; it reads SAK.

It belongs to the TRAFAC class translation factor GTPase superfamily. Classic translation factor GTPase family. IF-2 subfamily.

Its subcellular location is the cytoplasm. Its function is as follows. One of the essential components for the initiation of protein synthesis. Protects formylmethionyl-tRNA from spontaneous hydrolysis and promotes its binding to the 30S ribosomal subunits. Also involved in the hydrolysis of GTP during the formation of the 70S ribosomal complex. The chain is Translation initiation factor IF-2 from Baumannia cicadellinicola subsp. Homalodisca coagulata.